The primary structure comprises 92 residues: Secreted RxLR effector protein RXLR-C02 (92 aa).

The first 21 residues, 1-21 (MQFHLLVMTTIAASFAATGSA), serve as a signal peptide directing secretion. Residues 48–51 (RALR) carry the RxLR motif. The interval 54 to 75 (ENRGLIGDDSDSSISDSDSEAK) is disordered.

It belongs to the RxLR effector family.

Its subcellular location is the secreted. The protein resides in the host cytoplasm. The protein localises to the host nucleus. Its function is as follows. Secreted effector that suppresses pattern-triggered immunity (PTI) in plant host. This chain is Secreted RxLR effector protein RXLR-C02, found in Plasmopara halstedii (Downy mildew of sunflower).